The sequence spans 109 residues: MASIIFSAKDIFEQEFGREVRGYNKVEVDEFLDDVIKDYETYAALVKSLRQEIADLKEELTRKPKPSPVQAEPLEAAITSSMTNFDILKRLNRLEKEVFGKQILDNSDF.

Residues 36 to 63 (IKDYETYAALVKSLRQEIADLKEELTRK) are a coiled coil.

This sequence belongs to the GpsB family. Forms polymers through the coiled coil domains. Interacts with PBP1, MreC and EzrA.

It localises to the cytoplasm. Its function is as follows. Divisome component that associates with the complex late in its assembly, after the Z-ring is formed, and is dependent on DivIC and PBP2B for its recruitment to the divisome. Together with EzrA, is a key component of the system that regulates PBP1 localization during cell cycle progression. Its main role could be the removal of PBP1 from the cell pole after pole maturation is completed. Also contributes to the recruitment of PBP1 to the division complex. Not essential for septum formation. The protein is Cell cycle protein GpsB of Streptococcus pneumoniae serotype 4 (strain ATCC BAA-334 / TIGR4).